The sequence spans 361 residues: DNA-(apurinic or apyrimidinic site) endonuclease (361 aa).

A disordered region spans residues Met-1–Ile-90. Over residues Thr-25 to Glu-39 the composition is skewed to acidic residues. The Nuclear localization signal motif lies at Lys-41 to Lys-44. Over residues Arg-43–Lys-64 the composition is skewed to basic residues. The span at Glu-68 to Glu-80 shows a compositional bias: acidic residues. Glu-139 serves as a coordination point for Mg(2+). The active site involves Tyr-211. 3 residues coordinate Mg(2+): Asp-252, Asn-254, and Asp-350. The Proton donor/acceptor role is filled by Asp-252.

This sequence belongs to the DNA repair enzymes AP/ExoA family. Requires Mg(2+) as cofactor. Mn(2+) serves as cofactor.

Its subcellular location is the nucleus. The sequence is that of DNA-(apurinic or apyrimidinic site) endonuclease (apeA) from Dictyostelium discoideum (Social amoeba).